The following is a 132-amino-acid chain: Small ribosomal subunit protein uS8 (132 aa).

The protein belongs to the universal ribosomal protein uS8 family. Part of the 30S ribosomal subunit. Contacts proteins S5 and S12.

One of the primary rRNA binding proteins, it binds directly to 16S rRNA central domain where it helps coordinate assembly of the platform of the 30S subunit. This Leifsonia xyli subsp. xyli (strain CTCB07) protein is Small ribosomal subunit protein uS8.